The following is a 286-amino-acid chain: Type II restriction enzyme NgoMIV (286 aa).

Asp-140 and Cys-186 together coordinate Mg(2+).

As to quaternary structure, homotetramer. Requires Mg(2+) as cofactor.

The enzyme catalyses Endonucleolytic cleavage of DNA to give specific double-stranded fragments with terminal 5'-phosphates.. Functionally, a P subtype restriction enzyme that recognizes the double-stranded sequence 5'-GCCGGC-3' and cleaves after G-1. In Neisseria gonorrhoeae, this protein is Type II restriction enzyme NgoMIV (ngoMIVR).